Reading from the N-terminus, the 23-residue chain is Phospholipase A2 crotoxin basic chain 3 (23 aa).

The cofactor is Ca(2+). In terms of processing, contains 7 disulfide bonds. In terms of tissue distribution, expressed by the venom gland.

It localises to the secreted. The catalysed reaction is a 1,2-diacyl-sn-glycero-3-phosphocholine + H2O = a 1-acyl-sn-glycero-3-phosphocholine + a fatty acid + H(+). In terms of biological role, snake venom phospholipase A2 (PLA2) that shows presynaptic neurotoxicity. PLA2 catalyzes the calcium-dependent hydrolysis of the 2-acyl groups in 3-sn-phosphoglycerides. The polypeptide is Phospholipase A2 crotoxin basic chain 3 (Crotalus durissus terrificus (South American rattlesnake)).